The sequence spans 251 residues: NADPH-dependent oxidoreductase (251 aa).

This sequence belongs to the flavin oxidoreductase frp family. It depends on FMN as a cofactor.

In terms of biological role, reduces FMN, organic nitro compounds and disulfide DTNB. Involved in maintenance of the cellular redox state and the disulfide stress response. The chain is NADPH-dependent oxidoreductase (nfrA) from Staphylococcus aureus (strain MSSA476).